We begin with the raw amino-acid sequence, 194 residues long: Segregation and condensation protein B (194 aa).

The protein belongs to the ScpB family. In terms of assembly, homodimer. Homodimerization may be required to stabilize the binding of ScpA to the Smc head domains. Component of a cohesin-like complex composed of ScpA, ScpB and the Smc homodimer, in which ScpA and ScpB bind to the head domain of Smc. The presence of the three proteins is required for the association of the complex with DNA.

Its subcellular location is the cytoplasm. In terms of biological role, participates in chromosomal partition during cell division. May act via the formation of a condensin-like complex containing Smc and ScpA that pull DNA away from mid-cell into both cell halves. The sequence is that of Segregation and condensation protein B from Brevibacillus brevis (strain 47 / JCM 6285 / NBRC 100599).